Here is a 513-residue protein sequence, read N- to C-terminus: Histidine ammonia-lyase (513 aa).

The segment at residues 145–147 is a cross-link (5-imidazolinone (Ala-Gly)); the sequence is ASG. 2,3-didehydroalanine (Ser) is present on Ser146.

The protein belongs to the PAL/histidase family. Post-translationally, contains an active site 4-methylidene-imidazol-5-one (MIO), which is formed autocatalytically by cyclization and dehydration of residues Ala-Ser-Gly.

It localises to the cytoplasm. The catalysed reaction is L-histidine = trans-urocanate + NH4(+). It functions in the pathway amino-acid degradation; L-histidine degradation into L-glutamate; N-formimidoyl-L-glutamate from L-histidine: step 1/3. The sequence is that of Histidine ammonia-lyase from Vibrio vulnificus (strain YJ016).